The following is an 86-amino-acid chain: Small ribosomal subunit protein uS17 (86 aa).

Belongs to the universal ribosomal protein uS17 family. In terms of assembly, part of the 30S ribosomal subunit.

Functionally, one of the primary rRNA binding proteins, it binds specifically to the 5'-end of 16S ribosomal RNA. This is Small ribosomal subunit protein uS17 from Tropheryma whipplei (strain TW08/27) (Whipple's bacillus).